A 148-amino-acid chain; its full sequence is Ponticulin-like protein D (148 aa).

A signal peptide spans 1 to 20 (MLLNKSLLLLVAFVFAIVSA). N-linked (GlcNAc...) asparagine glycosylation occurs at N67. Residue D125 is the site of GPI-like-anchor amidated aspartate attachment. The propeptide at 126–148 (SSAAATMIASFSAILIALLFALL) is removed in mature form.

It belongs to the ponticulin family. In terms of processing, the GPI-like-anchor contains a phosphoceramide group, rather than a phosphatidyl group.

The protein localises to the cell membrane. This Dictyostelium discoideum (Social amoeba) protein is Ponticulin-like protein D (ponD).